Here is a 215-residue protein sequence, read N- to C-terminus: Octanoyltransferase (215 aa).

A BPL/LPL catalytic domain is found at 31 to 206 (PESQDEVWLV…QLVRHLDYAE (176 aa)). Substrate is bound by residues 70 to 77 (RGGQVTYH), 137 to 139 (SLG), and 150 to 152 (GLA). Cys-168 serves as the catalytic Acyl-thioester intermediate.

Belongs to the LipB family.

The protein localises to the cytoplasm. The enzyme catalyses octanoyl-[ACP] + L-lysyl-[protein] = N(6)-octanoyl-L-lysyl-[protein] + holo-[ACP] + H(+). It functions in the pathway protein modification; protein lipoylation via endogenous pathway; protein N(6)-(lipoyl)lysine from octanoyl-[acyl-carrier-protein]: step 1/2. Its function is as follows. Catalyzes the transfer of endogenously produced octanoic acid from octanoyl-acyl-carrier-protein onto the lipoyl domains of lipoate-dependent enzymes. Lipoyl-ACP can also act as a substrate although octanoyl-ACP is likely to be the physiological substrate. The sequence is that of Octanoyltransferase from Pseudomonas entomophila (strain L48).